A 344-amino-acid chain; its full sequence is Anthranilate phosphoribosyltransferase (344 aa).

5-phospho-alpha-D-ribose 1-diphosphate contacts are provided by residues Gly80, 83–84 (GD), Thr88, 90–93 (NVST), 108–116 (KHGNRSVSS), and Ser120. Gly80 contacts anthranilate. Position 92 (Ser92) interacts with Mg(2+). Residue Asn111 participates in anthranilate binding. Arg166 provides a ligand contact to anthranilate. Positions 225 and 226 each coordinate Mg(2+).

This sequence belongs to the anthranilate phosphoribosyltransferase family. In terms of assembly, homodimer. Mg(2+) serves as cofactor.

It carries out the reaction N-(5-phospho-beta-D-ribosyl)anthranilate + diphosphate = 5-phospho-alpha-D-ribose 1-diphosphate + anthranilate. The protein operates within amino-acid biosynthesis; L-tryptophan biosynthesis; L-tryptophan from chorismate: step 2/5. In terms of biological role, catalyzes the transfer of the phosphoribosyl group of 5-phosphorylribose-1-pyrophosphate (PRPP) to anthranilate to yield N-(5'-phosphoribosyl)-anthranilate (PRA). The protein is Anthranilate phosphoribosyltransferase of Legionella pneumophila (strain Corby).